Reading from the N-terminus, the 417-residue chain is 4-hydroxy-3-methylbut-2-en-1-yl diphosphate synthase (flavodoxin) (417 aa).

Cysteine 307, cysteine 310, cysteine 353, and glutamate 360 together coordinate [4Fe-4S] cluster.

The protein belongs to the IspG family. [4Fe-4S] cluster serves as cofactor.

It catalyses the reaction (2E)-4-hydroxy-3-methylbut-2-enyl diphosphate + oxidized [flavodoxin] + H2O + 2 H(+) = 2-C-methyl-D-erythritol 2,4-cyclic diphosphate + reduced [flavodoxin]. The protein operates within isoprenoid biosynthesis; isopentenyl diphosphate biosynthesis via DXP pathway; isopentenyl diphosphate from 1-deoxy-D-xylulose 5-phosphate: step 5/6. Converts 2C-methyl-D-erythritol 2,4-cyclodiphosphate (ME-2,4cPP) into 1-hydroxy-2-methyl-2-(E)-butenyl 4-diphosphate. In Xylella fastidiosa (strain 9a5c), this protein is 4-hydroxy-3-methylbut-2-en-1-yl diphosphate synthase (flavodoxin).